Here is a 55-residue protein sequence, read N- to C-terminus: Small ribosomal subunit protein uS14 (55 aa).

The Zn(2+) site is built by Cys20, Cys23, Cys38, and Cys41.

The protein belongs to the universal ribosomal protein uS14 family. Zn(2+) serves as cofactor.

The sequence is that of Small ribosomal subunit protein uS14 (rps29) from Dictyostelium discoideum (Social amoeba).